Here is a 166-residue protein sequence, read N- to C-terminus: Large ribosomal subunit protein mL49 (166 aa).

The disordered stretch occupies residues 56–78 (RIPDPPKHEHYPTPSGWQPPRDP).

It belongs to the mitochondrion-specific ribosomal protein mL49 family. In terms of assembly, component of the mitochondrial large ribosomal subunit (mt-LSU). Mature mammalian 55S mitochondrial ribosomes consist of a small (28S) and a large (39S) subunit. The 28S small subunit contains a 12S ribosomal RNA (12S mt-rRNA) and 30 different proteins. The 39S large subunit contains a 16S rRNA (16S mt-rRNA), a copy of mitochondrial valine transfer RNA (mt-tRNA(Val)), which plays an integral structural role, and 52 different proteins. Interacts with OXA1L. As to expression, ubiquitous.

Its subcellular location is the mitochondrion. This chain is Large ribosomal subunit protein mL49 (MRPL49), found in Homo sapiens (Human).